The sequence spans 61 residues: Cecropin-D (61 aa).

The signal sequence occupies residues 1–22 (MKFSKIFVFVFAIVFATASVSA). The propeptide at 23–24 (AP) is removed by a dipeptidylpeptidase. Position 60 is a glutamine amide (Gln-60).

The protein belongs to the cecropin family. As to expression, mainly in fat body. Lower in hemocytes. Not expressed in midguts, malpighian tubules and silk glands.

The protein resides in the secreted. Cecropins have lytic and antibacterial activity against several Gram-positive and Gram-negative bacteria. This chain is Cecropin-D (CECD), found in Bombyx mori (Silk moth).